We begin with the raw amino-acid sequence, 126 residues long: Protein ApaG (126 aa).

The ApaG domain occupies 2–126 (SDPRYQIDVS…FRLAVPGALH (125 aa)).

The protein is Protein ApaG of Pseudomonas fluorescens (strain SBW25).